The primary structure comprises 397 residues: Arginine biosynthesis bifunctional protein ArgJ (397 aa).

The substrate site is built by Thr147, Lys173, Thr184, Glu270, Asn392, and Thr397. The active-site Nucleophile is Thr184.

It belongs to the ArgJ family. As to quaternary structure, heterotetramer of two alpha and two beta chains.

Its subcellular location is the cytoplasm. It catalyses the reaction N(2)-acetyl-L-ornithine + L-glutamate = N-acetyl-L-glutamate + L-ornithine. The enzyme catalyses L-glutamate + acetyl-CoA = N-acetyl-L-glutamate + CoA + H(+). The protein operates within amino-acid biosynthesis; L-arginine biosynthesis; L-ornithine and N-acetyl-L-glutamate from L-glutamate and N(2)-acetyl-L-ornithine (cyclic): step 1/1. Its pathway is amino-acid biosynthesis; L-arginine biosynthesis; N(2)-acetyl-L-ornithine from L-glutamate: step 1/4. Functionally, catalyzes two activities which are involved in the cyclic version of arginine biosynthesis: the synthesis of N-acetylglutamate from glutamate and acetyl-CoA as the acetyl donor, and of ornithine by transacetylation between N(2)-acetylornithine and glutamate. This Staphylococcus epidermidis (strain ATCC 35984 / DSM 28319 / BCRC 17069 / CCUG 31568 / BM 3577 / RP62A) protein is Arginine biosynthesis bifunctional protein ArgJ.